Reading from the N-terminus, the 393-residue chain is Protein TsgA (393 aa).

12 helical membrane-spanning segments follow: residues 11-31 (WISF…GMVM), 51-71 (FLNA…EIVP), 78-98 (FGFL…SLAL), 101-121 (TAMF…TFLI), 140-160 (FFSM…AHSI), 162-182 (WYWV…LTFG), 206-226 (IGVL…LGFI), 245-265 (TLVS…SFIL), 273-293 (ILTV…TGTP), 297-317 (AWSI…IITL), 332-352 (FVLT…GPIV), and 361-381 (LLTA…LGFV).

It belongs to the major facilitator superfamily. TsgA family.

It is found in the cell inner membrane. This is Protein TsgA from Shigella boydii serotype 18 (strain CDC 3083-94 / BS512).